We begin with the raw amino-acid sequence, 337 residues long: Putative olfactory receptor 1F12P (337 aa).

The Extracellular portion of the chain corresponds to 1-25 (MEGKNQTNISEFLLLGFSSWQQQQV). Asn-5 and Asn-8 each carry an N-linked (GlcNAc...) asparagine glycan. A helical membrane pass occupies residues 26–49 (LLFALFLCLYLTGLFGNLLILLAI). At 50–57 (GSDHCLHT) the chain is on the cytoplasmic side. Residues 58 to 79 (PMYFFLANLSLVDLCLPSATVP) form a helical membrane-spanning segment. Residues 80 to 100 (KMLLNIQTQTQTISYPGCLAQ) are Extracellular-facing. Cys-97 and Cys-189 form a disulfide bridge. The chain crosses the membrane as a helical span at residues 101-120 (MYFCMMFANMDNFLLTVMAY). The Cytoplasmic portion of the chain corresponds to 121 to 139 (DRYVAICHPLHYSTIMALR). Residues 140 to 158 (LCASLVAAPWVIAILNPLL) form a helical membrane-spanning segment. Residues 159 to 196 (HTLMMAHLHFCSDNVIHHFFCDINSLLPLSCSDTSLNQ) are Extracellular-facing. Residues 197 to 219 (LSVLATVGLIFVVPSVCILVSYI) traverse the membrane as a helical segment. Topologically, residues 220-236 (LIVSAVMKVPSAQGKLK) are cytoplasmic. The chain crosses the membrane as a helical span at residues 237–259 (AFSTCGSHLALVILFYGAITGVY). Over 260-272 (MSPLSNHSTEKDS) the chain is Extracellular. The N-linked (GlcNAc...) asparagine glycan is linked to Asn-265. A helical transmembrane segment spans residues 273-292 (AASVIFMVVAPVLNPFIYSL). Residues 293-337 (RNNELKGTLKKTLSRPGAVAHACNPSTLGGRGGWIMRSGDRDHPG) are Cytoplasmic-facing.

It belongs to the G-protein coupled receptor 1 family.

Its subcellular location is the cell membrane. Functionally, odorant receptor. This chain is Putative olfactory receptor 1F12P, found in Homo sapiens (Human).